Reading from the N-terminus, the 59-residue chain is Large ribosomal subunit protein uL30 (59 aa).

This sequence belongs to the universal ribosomal protein uL30 family. As to quaternary structure, part of the 50S ribosomal subunit.

This is Large ribosomal subunit protein uL30 from Bacillus licheniformis (strain ATCC 14580 / DSM 13 / JCM 2505 / CCUG 7422 / NBRC 12200 / NCIMB 9375 / NCTC 10341 / NRRL NRS-1264 / Gibson 46).